The following is a 216-amino-acid chain: GTPase IMAP family member GIMD1 (216 aa).

Residues 5–216 (KMIINLAVLG…ENHFQVLSFT (212 aa)) enclose the AIG1-type G domain. GTP is bound by residues 14–22 (GKTQSGKSS), serine 35, and 147–149 (HAE).

The protein belongs to the TRAFAC class TrmE-Era-EngA-EngB-Septin-like GTPase superfamily. AIG1/Toc34/Toc159-like paraseptin GTPase family. IAN subfamily.

The chain is GTPase IMAP family member GIMD1 (Gimd1) from Rattus norvegicus (Rat).